We begin with the raw amino-acid sequence, 249 residues long: uncharacterized protein (249 aa).

Positions 4 to 71 constitute an S4 RNA-binding domain; the sequence is VRINKFLSEA…RKRYIILNKP (68 aa). Aspartate 106 serves as the catalytic Nucleophile.

It belongs to the pseudouridine synthase RsuA family.

The enzyme catalyses a uridine in RNA = a pseudouridine in RNA. This is an uncharacterized protein from Aquifex aeolicus (strain VF5).